Here is a 150-residue protein sequence, read N- to C-terminus: Ribosome maturation factor RimP (150 aa).

Belongs to the RimP family.

Its subcellular location is the cytoplasm. In terms of biological role, required for maturation of 30S ribosomal subunits. The chain is Ribosome maturation factor RimP from Francisella tularensis subsp. mediasiatica (strain FSC147).